We begin with the raw amino-acid sequence, 155 residues long: Ribosomal RNA large subunit methyltransferase H 1 (155 aa).

S-adenosyl-L-methionine contacts are provided by residues leucine 76, glycine 108, and 127 to 132 (FSKMTF).

The protein belongs to the RNA methyltransferase RlmH family. Homodimer.

It localises to the cytoplasm. The enzyme catalyses pseudouridine(1915) in 23S rRNA + S-adenosyl-L-methionine = N(3)-methylpseudouridine(1915) in 23S rRNA + S-adenosyl-L-homocysteine + H(+). In terms of biological role, specifically methylates the pseudouridine at position 1915 (m3Psi1915) in 23S rRNA. In Thermoanaerobacter pseudethanolicus (strain ATCC 33223 / 39E) (Clostridium thermohydrosulfuricum), this protein is Ribosomal RNA large subunit methyltransferase H 1.